The sequence spans 172 residues: Shikimate kinase (172 aa).

11-16 serves as a coordination point for ATP; that stretch reads GAGKST. S15 is a binding site for Mg(2+). D33, R57, and G79 together coordinate substrate. R117 contacts ATP. R136 provides a ligand contact to substrate. R153 lines the ATP pocket.

Belongs to the shikimate kinase family. Monomer. It depends on Mg(2+) as a cofactor.

Its subcellular location is the cytoplasm. It catalyses the reaction shikimate + ATP = 3-phosphoshikimate + ADP + H(+). The protein operates within metabolic intermediate biosynthesis; chorismate biosynthesis; chorismate from D-erythrose 4-phosphate and phosphoenolpyruvate: step 5/7. Functionally, catalyzes the specific phosphorylation of the 3-hydroxyl group of shikimic acid using ATP as a cosubstrate. The chain is Shikimate kinase from Pseudomonas syringae pv. tomato (strain ATCC BAA-871 / DC3000).